We begin with the raw amino-acid sequence, 229 residues long: Peptidyl-prolyl cis-trans isomerase FKBP17-1, chloroplastic (229 aa).

A chloroplast-targeting transit peptide spans 1–63; the sequence is MIRCFAWTPL…SISLSIIAVT (63 aa). Residues 105 to 225 enclose the PPIase FKBP-type domain; that stretch reads GDQIEIHYYG…VFDIELVSTR (121 aa).

The protein belongs to the FKBP-type PPIase family.

The protein localises to the plastid. The protein resides in the chloroplast thylakoid lumen. It catalyses the reaction [protein]-peptidylproline (omega=180) = [protein]-peptidylproline (omega=0). Functionally, PPIases accelerate the folding of proteins. It catalyzes the cis-trans isomerization of proline imidic peptide bonds in oligopeptides. The sequence is that of Peptidyl-prolyl cis-trans isomerase FKBP17-1, chloroplastic (FKBP17-1) from Arabidopsis thaliana (Mouse-ear cress).